An 82-amino-acid chain; its full sequence is Metallothionein (82 aa).

Cys-6, Cys-8, Cys-11, Cys-13, Cys-29, Cys-33, His-37, Cys-43, Cys-48, and Cys-50 together coordinate Cd(2+). Zn(2+) is bound by residues Cys-6, Cys-8, and Cys-11. Residues Cys-29, Cys-33, His-37, Cys-43, Cys-48, and Cys-50 each coordinate Zn(2+). A disordered region spans residues 61 to 82; that stretch reads ITNNQLDEALEETFPASDPISP.

The protein belongs to the metallothionein superfamily.

Its function is as follows. Metallothioneins are small proteins that have a high content of cysteine residues which allow them to bind heavy metal ions through clusters of thiolate bonds. Preferentially, binds four Cd(2+) ions. Also binds three Zn(2+) ions but with less affinity. Required for long-term viability. May play a role in the storage or sequestration of metals when present in excess. This is Metallothionein from Pseudomonas fluorescens (strain Q2-87).